Reading from the N-terminus, the 461-residue chain is B3 domain-containing protein REM9 (461 aa).

A DNA-binding region (TF-B3 1) is located at residues 11-103; it reads NQHFFQPLLP…VFHVTALGPS (93 aa). Residues 110–146 are disordered; the sequence is PQSSRHEEGEESGENEISEKEGEENVQKESDKSSSDL. Positions 126–143 are enriched in basic and acidic residues; it reads ISEKEGEENVQKESDKSS. 2 DNA-binding regions (TF-B3) span residues 148-244 and 230-332; these read CFSQ…CSRT and LQKA…EQPS. The interval 333–415 is disordered; sequence FKAEDGRHKR…SGIEGNLQHT (83 aa). Residues 384-394 show a composition bias toward basic and acidic residues; sequence PKVEIREKIAE. Polar residues predominate over residues 400-415; it reads RASNKSSGIEGNLQHT.

The protein localises to the nucleus. The protein is B3 domain-containing protein REM9 (REM9) of Arabidopsis thaliana (Mouse-ear cress).